The primary structure comprises 153 residues: Pheromone-binding protein Gp-9 (153 aa).

Positions 1–19 are cleaved as a signal peptide; that stretch reads MKTFVLHIFIFALVAFASA. 3 disulfides stabilise this stretch: Cys37–Cys77, Cys73–Cys129, and Cys118–Cys138.

This sequence belongs to the PBP/GOBP family. Homodimer.

It is found in the secreted. In terms of biological role, colony queen number, a major feature of social organization, is associated with worker genotype for Gp-9. Colonies are headed by either a single reproductive queen (monogyne form) or multiple queens (polygyne form). Differences in worker Gp-9 genotypes between social forms may cause differences in workers' abilities to recognize queens and regulate their numbers. This chain is Pheromone-binding protein Gp-9, found in Solenopsis tridens (Fire ant).